The following is a 335-amino-acid chain: Homeobox protein DBX1 (335 aa).

Disordered stretches follow at residues 58 to 102 (IPAA…LSPA) and 240 to 335 (KERE…ITVS). Residues 83-95 (GSPGSGSRRGSSP) show a composition bias toward low complexity. Positions 181 to 240 (GMLRRAVFSDVQRKALEKTFQKQKYISKPDRKKLASKLGLKDSQVKIWFQNRRMKWRNSK) form a DNA-binding region, homeobox. Positions 299–317 (GPLPASPAHSSSPGKPSDF) are enriched in low complexity. Residues 318–335 (SDSDEDEEGEEDEEITVS) are compositionally biased toward acidic residues.

It belongs to the H2.0 homeobox family.

The protein localises to the nucleus. Could have a role in patterning the central nervous system during embryogenesis. Has a key role in regulating the distinct phenotypic features that distinguish two major classes of ventral interneurons, V0 and V1 neurons. Regulates the transcription factor profile, neurotransmitter phenotype, intraspinal migratory path and axonal trajectory of V0 neurons, features that differentiate them from an adjacent set of V1 neurons. This Mus musculus (Mouse) protein is Homeobox protein DBX1 (Dbx1).